The chain runs to 313 residues: Probable cytochrome c oxidase subunit 2 (313 aa).

The RPE1 insert domain occupies 5-51; that stretch reads RYWSKQSYKKLKVDQEHNTTEYTNVCNSTSLGSTYTLPLKMELWKIY. The next 3 membrane-spanning stretches (helical) occupy residues 39–59, 94–114, and 131–151; these read YTLP…YFLI, LLYI…FVCI, and LLIE…IAVP. Residues H233, C268, C272, and H276 each coordinate Cu cation.

Belongs to the cytochrome c oxidase subunit 2 family. It depends on Cu cation as a cofactor. The cofactor is heme.

It localises to the cell membrane. It catalyses the reaction 4 Fe(II)-[cytochrome c] + O2 + 8 H(+)(in) = 4 Fe(III)-[cytochrome c] + 2 H2O + 4 H(+)(out). Its function is as follows. Subunits I and II form the functional core of the enzyme complex. Electrons originating in cytochrome c are transferred via heme a and Cu(A) to the binuclear center formed by heme a3 and Cu(B). In Rickettsia prowazekii (strain Madrid E), this protein is Probable cytochrome c oxidase subunit 2 (ctaC).